We begin with the raw amino-acid sequence, 573 residues long: DNA polymerase lambda (573 aa).

The BRCT domain maps to 35–131 (DARGWLSSLR…KLTDTDGFSL (97 aa)). The segment at 126-235 (TDGFSLSSPK…GPDPAPEALG (110 aa)) is disordered. Polar residues predominate over residues 127–149 (DGFSLSSPKRSLNEPQPSKSGQD). Positions 263-277 (KAYNVQGDKWRALGY) are DNA-binding. The Schiff-base intermediate with DNA role is filled by lysine 310. The interval 343–346 (GTKT) is DNA-binding. DCTP is bound by residues arginine 384, 415–418 (SFRR), and 424–427 (GDVD). The segment at 418–427 (RGKVTCGDVD) is involved in primer binding. 3 residues coordinate Mn(2+): aspartate 425, aspartate 427, and aspartate 488. A DNA-binding region spans residues 464–503 (ENGQQQKYLGVCRLPGAGQRHRRLDIIVVPYSEFACALLY). Asparagine 511 is a binding site for dCTP.

It belongs to the DNA polymerase type-X family. Interacts with PCNA. Interacts with PAXX; promoting POLL recruitment to double-strand breaks (DSBs) and stimulation of the end-filling activity of POLL. Interacts with XRCC4; promoting POLL recruitment to double-strand breaks (DSBs) and stimulation of the end-filling activity of POLL. Interacts with NHEJ1/XLF; promoting POLL recruitment to double-strand breaks (DSBs) and stimulation of the end-filling activity of POLL. Mn(2+) serves as cofactor.

The protein resides in the nucleus. The catalysed reaction is DNA(n) + a 2'-deoxyribonucleoside 5'-triphosphate = DNA(n+1) + diphosphate. Functionally, DNA polymerase that functions in several pathways of DNA repair. Involved in base excision repair (BER) responsible for repair of lesions that give rise to abasic (AP) sites in DNA. Also contributes to DNA double-strand break repair by non-homologous end joining and homologous recombination. Has both template-dependent and template-independent (terminal transferase) DNA polymerase activities. Also has a 5'-deoxyribose-5-phosphate lyase (dRP lyase) activity. This chain is DNA polymerase lambda, found in Rattus norvegicus (Rat).